The primary structure comprises 112 residues: UPF0145 protein RB3016 (112 aa).

It belongs to the UPF0145 family.

The chain is UPF0145 protein RB3016 from Rhodopirellula baltica (strain DSM 10527 / NCIMB 13988 / SH1).